The primary structure comprises 878 residues: Bifunctional heparan sulfate N-deacetylase/N-sulfotransferase 1 (878 aa).

The Cytoplasmic segment spans residues 1-17 (MSLSLKTRRFGRPVRPQ). Residues 1 to 169 (MSLSLKTRRF…VEYGVGIIGF (169 aa)) form a sufficient for localization to Golgi membrane region. A helical; Signal-anchor for type II membrane protein transmembrane segment spans residues 18–38 (LVLLLLFALCLLSVFISAYYL). At 39-878 (YGWKRGLEPS…WLREELQNTR (840 aa)) the chain is on the lumenal side. Residues 40-594 (GWKRGLEPSG…KRHKDIWSKE (555 aa)) are heparan sulfate N-deacetylase 1. Asn231, Asn347, and Asn397 each carry an N-linked (GlcNAc...) asparagine glycan. Residues 595–878 (KTCDRFPKLL…WLREELQNTR (284 aa)) form a heparan sulfate N-sulfotransferase 1 region. Lys610 functions as the For sulfotransferase activity in the catalytic mechanism. An adenosine 3',5'-bisphosphate-binding site is contributed by 610-614 (KTGTT). Asn663 carries an N-linked (GlcNAc...) asparagine glycan. The adenosine 3',5'-bisphosphate site is built by Ser708 and Trp813. Cys814 and Cys824 are oxidised to a cystine. Adenosine 3',5'-bisphosphate is bound at residue 829 to 833 (KGRKY).

It belongs to the sulfotransferase 1 family. NDST subfamily. As to quaternary structure, monomer.

Its subcellular location is the golgi apparatus membrane. The protein localises to the golgi apparatus. It is found in the trans-Golgi network membrane. It carries out the reaction alpha-D-glucosaminyl-[heparan sulfate](n) + 3'-phosphoadenylyl sulfate = N-sulfo-alpha-D-glucosaminyl-[heparan sulfate](n) + adenosine 3',5'-bisphosphate + 2 H(+). It participates in glycan metabolism; heparan sulfate biosynthesis. Its pathway is glycan metabolism; heparin biosynthesis. In terms of biological role, essential bifunctional enzyme that catalyzes both the N-deacetylation and the N-sulfation of glucosamine (GlcNAc) of the glycosaminoglycan in heparan sulfate. Modifies the GlcNAc-GlcA disaccharide repeating sugar backbone to make N-sulfated heparosan, a prerequisite substrate for later modifications in heparin biosynthesis. Plays a role in determining the extent and pattern of sulfation of heparan sulfate. The chain is Bifunctional heparan sulfate N-deacetylase/N-sulfotransferase 1 (ndst1) from Xenopus laevis (African clawed frog).